The following is a 318-amino-acid chain: Tyrosine recombinase XerD (318 aa).

One can recognise a Core-binding (CB) domain in the interval Pro-5 to Leu-90. A Tyr recombinase domain is found at Gly-111–Arg-310. Catalysis depends on residues Arg-161, Lys-185, His-262, Arg-265, and His-288. Catalysis depends on Tyr-297, which acts as the O-(3'-phospho-DNA)-tyrosine intermediate.

It belongs to the 'phage' integrase family. XerD subfamily. In terms of assembly, forms a cyclic heterotetrameric complex composed of two molecules of XerC and two molecules of XerD.

Its subcellular location is the cytoplasm. Its function is as follows. Site-specific tyrosine recombinase, which acts by catalyzing the cutting and rejoining of the recombining DNA molecules. The XerC-XerD complex is essential to convert dimers of the bacterial chromosome into monomers to permit their segregation at cell division. It also contributes to the segregational stability of plasmids. This is Tyrosine recombinase XerD from Bradyrhizobium diazoefficiens (strain JCM 10833 / BCRC 13528 / IAM 13628 / NBRC 14792 / USDA 110).